A 1225-amino-acid chain; its full sequence is MGRLVGLELSNFKSYRGVTKVGFGESNFTSIIGPNGSGKSNMMDAISFVLGVRSNHLRSNILKDLIYRGVLNDENSDDYDNEGAASSNPQSAYVKAFYQKGNKLVELMRIISRNGDTSYKIDGKTVSYKDYSIFLENENILIKAKNFLVFQGDVEQIAAQSPVELSRMFEEVSGSIQYKKEYEELKEKIEKLSKSATESIKNRRRIHGELKTYKEGINKNEEYRKQLDKKNELQKFQALWQLYHLEQQKEELTDKLSALNSEISSLKGKINNEMKSLQRSKSSFVKESAVISKQKSKLDYIFKDKEKLVSDLRLIKVPQQAAGKRISHIEKRIESLQKDLQRQKTYVERFETQLKVVTRSKEAFEEEIKQSARNYDKFKLNENDLKTYNCLHEKYLTEGGSILEEKIAVLNNDKREIQEELERFNKRADISKRRITEELSITGEKLDTQLNDLRVSLNEKNALHTERLHELKKLQSDIESANNQEYDLNFKLRETLVKIDDLSANQRETMKERKLRENIAMLKRFFPGVKGLVHDLCHPKKEKYGLAVSTILGKNFDSVIVENLTVAQECIAFLKKQRAGTASFIPLDTIETELPTLSLPDSQDYILSINAIDYEPEYEKAMQYVCGDSIICNTLNIAKDLKWKKGIRGKLVTIEGALIHKAGLMTGGISGDANNRWDKEEYQSLMSLKDKLLIQIDELSNGQRSNSIRAREVENSVSLLNSDIANLRTQVTQQKRSLDENRLEIKYHNDLIEKEIQPKITELKKKLDDLENTKDNLVKEKEALQNNIFKEFTSKIGFTIKEYENHSGELMRQQSKELQQLQKQILTVENKLQFETDRLSTTQRRYEKAQKDLENAQVEMKSLEEQEYAIEMKIGSIESKLEEHKNHLDELQKKFVTKQSELNSSEDILEDMNSNLQVLKRERDGIKEDIEKFDLERVTALKNCKISNINIPISSETTIDDLPISSTDNEAITISNSIDINYKGLPKKYKENNTDSARKELEQKIHEVEEILNELQPNARALERYDEAEGRFEVINNETEQLKAEEKKILNQFLKIKKKRKELFEKTFDYVSDHLDAIYRELTKNPNSNVELAGGNASLTIEDEDEPFNAGIKYHATPPLKRFKDMEYLSGGEKTVAALALLFAINSYQPSPFFVLDEVDAALDITNVQRIAAYIRRHRNPDLQFIVISLKNTMFEKSDALVGVYRQQQENSSKIITLDLSNYAE.

Residue 33–40 (GPNGSGKS) participates in ATP binding. A coiled-coil region spans residues 173–489 (SGSIQYKKEY…SANNQEYDLN (317 aa)). One can recognise an SMC hinge domain in the interval 527–641 (PGVKGLVHDL…CNTLNIAKDL (115 aa)). A coiled-coil region spans residues 679 to 1063 (KEEYQSLMSL…LKIKKKRKEL (385 aa)). The short motif at 1057 to 1061 (KKKRK) is the Nuclear localization signal element.

The protein belongs to the SMC family. SMC1 subfamily. Cohesin complexes are composed of the SMC1 and SMC3 heterodimer attached via their SMC hinge domain, MCD1/SCC1 which link them, and IRR1/SCC3, which interacts with MCD1. The cohesin complex also interacts with SCC2, which is required for its association with chromosomes.

Its subcellular location is the nucleus. The protein localises to the chromosome. In terms of biological role, involved in chromosome cohesion during cell cycle and in DNA repair. Central component of cohesin complex. The cohesin complex is required for the cohesion of sister chromatids after DNA replication. The cohesin complex apparently forms a large proteinaceous ring within which sister chromatids can be trapped. At anaphase, the complex is cleaved and dissociates from chromatin, allowing sister chromatids to segregate. This is Structural maintenance of chromosomes protein 1 (SMC1) from Saccharomyces cerevisiae (strain ATCC 204508 / S288c) (Baker's yeast).